Here is a 145-residue protein sequence, read N- to C-terminus: MIALIQRVSRASVTVADEVTGEIGPGLLVLLGVEKDDDEQKANRLCERVLGYRIFSDAEGKMNLNVQQAGGSVLVVSQFTLAADTERGMRPSFSKGAAPDRAEALYEYFVARCRQQEMHTQTGRFAADMQVSLVNDGPVTFWLQV.

The Gly-cisPro motif, important for rejection of L-amino acids signature appears at 137 to 138; it reads GP.

It belongs to the DTD family. In terms of assembly, homodimer.

The protein resides in the cytoplasm. It carries out the reaction glycyl-tRNA(Ala) + H2O = tRNA(Ala) + glycine + H(+). The catalysed reaction is a D-aminoacyl-tRNA + H2O = a tRNA + a D-alpha-amino acid + H(+). In terms of biological role, an aminoacyl-tRNA editing enzyme that deacylates mischarged D-aminoacyl-tRNAs. Also deacylates mischarged glycyl-tRNA(Ala), protecting cells against glycine mischarging by AlaRS. Acts via tRNA-based rather than protein-based catalysis; rejects L-amino acids rather than detecting D-amino acids in the active site. By recycling D-aminoacyl-tRNA to D-amino acids and free tRNA molecules, this enzyme counteracts the toxicity associated with the formation of D-aminoacyl-tRNA entities in vivo and helps enforce protein L-homochirality. The protein is D-aminoacyl-tRNA deacylase of Klebsiella pneumoniae subsp. pneumoniae (strain ATCC 700721 / MGH 78578).